Here is a 475-residue protein sequence, read N- to C-terminus: MNTALAQQIANEGGVEAWMIAQQHKSLLRFLTCGSVDDGKSTLIGRLLHDTRQIYEDQLSSLHNDSKRHGTQGEKLDLALLVDGLQAEREQGITIDVAYRYFSTEKRKFIIADTPGHEQYTRNMATGASTCELAILLIDARKGVLDQTRRHSFISTLLGIKHLVVAINKMDLVDYSEETFTRIRKDYLTFAEQLPGNLDIRFVPLSALEGDNVASQSESMPWYSGPTLLEVLETVEIQRVVDAQPMRFPVQYVNRPNLDFRGYAGTLASGRVEVGQRVKVLPSGVESNVARIVTFDGDREEAFAGEAITLVLTDEIDISRGDLLLAADEALPAVQSASVDVVWMAEQPLSPGQSYDIKIAGKKTRARVDGIRYQVDINNLTQREVENLPLNGIGLVDLTFDEPLVLDRYQQNPVTGGLIFIDRLSNVTVGAGMVHEPVSQATAAPSEFSAFELELNALVRRHFPHWGARDLLGDK.

One can recognise a tr-type G domain in the interval 25 to 239 (KSLLRFLTCG…EVLETVEIQR (215 aa)). Residues 34–41 (GSVDDGKS) are G1. A GTP-binding site is contributed by 34–41 (GSVDDGKS). The segment at 92–96 (GITID) is G2. The segment at 113–116 (DTPG) is G3. GTP is bound by residues 113–117 (DTPGH) and 168–171 (NKMD). The tract at residues 168-171 (NKMD) is G4. Residues 206-208 (SAL) are G5.

Belongs to the TRAFAC class translation factor GTPase superfamily. Classic translation factor GTPase family. CysN/NodQ subfamily. As to quaternary structure, heterodimer composed of CysD, the smaller subunit, and CysN.

It catalyses the reaction sulfate + ATP + H(+) = adenosine 5'-phosphosulfate + diphosphate. It functions in the pathway sulfur metabolism; hydrogen sulfide biosynthesis; sulfite from sulfate: step 1/3. In terms of biological role, with CysD forms the ATP sulfurylase (ATPS) that catalyzes the adenylation of sulfate producing adenosine 5'-phosphosulfate (APS) and diphosphate, the first enzymatic step in sulfur assimilation pathway. APS synthesis involves the formation of a high-energy phosphoric-sulfuric acid anhydride bond driven by GTP hydrolysis by CysN coupled to ATP hydrolysis by CysD. This is Sulfate adenylyltransferase subunit 1 from Escherichia coli O139:H28 (strain E24377A / ETEC).